A 337-amino-acid polypeptide reads, in one-letter code: Methionyl-tRNA formyltransferase (337 aa).

Residue 110-113 (SLLP) coordinates (6S)-5,6,7,8-tetrahydrofolate.

The protein belongs to the Fmt family.

It carries out the reaction L-methionyl-tRNA(fMet) + (6R)-10-formyltetrahydrofolate = N-formyl-L-methionyl-tRNA(fMet) + (6S)-5,6,7,8-tetrahydrofolate + H(+). Functionally, attaches a formyl group to the free amino group of methionyl-tRNA(fMet). The formyl group appears to play a dual role in the initiator identity of N-formylmethionyl-tRNA by promoting its recognition by IF2 and preventing the misappropriation of this tRNA by the elongation apparatus. The sequence is that of Methionyl-tRNA formyltransferase from Frankia casuarinae (strain DSM 45818 / CECT 9043 / HFP020203 / CcI3).